Reading from the N-terminus, the 443-residue chain is Nuclear distribution protein nudF (443 aa).

The 33-residue stretch at 9-41 folds into the LisH domain; the sequence is QAEELHKSIIAYLSSINASRSCEVLREELQVDS. A coiled-coil region spans residues 60–87; sequence TGIARLQKKILDLESKLAGLQTELDTIS. 8 WD repeats span residues 111 to 152, 154 to 194, 198 to 238, 241 to 280, 283 to 343, 345 to 384, 388 to 427, and 429 to 443; these read SHRD…RTLK, HMRP…ANVR, GHDH…CVKV, SQGSWINDVSPSFDGKWLVTGGRDQAAMVWEVASAKSVAS, GHEN…IKTL, GHDNWVRGLLFHPGGKYLISVADDKTIRCWDLSQGGRLVK, AHGHFVSCIRWGPVPVSDVPVETSESTKSSKSDSVKPGFQ, and VIATGSADSSVRIFT.

It belongs to the WD repeat LIS1/nudF family. In terms of assembly, self-associates. Interacts with nudE and dynein.

It localises to the cytoplasm. The protein localises to the cytoskeleton. Its subcellular location is the spindle pole. Its function is as follows. Positively regulates the activity of the minus-end directed microtubule motor protein dynein. May enhance dynein-mediated microtubule sliding by targeting dynein to the microtubule plus end. Required for nuclear migration during vegetative growth as well as development. Required for retrograde early endosome (EE) transport from the hyphal tip. Required for localization of dynein to the mitotic spindle poles. Recruits additional proteins to the dynein complex at SPBs. The polypeptide is Nuclear distribution protein nudF (Aspergillus niger (strain ATCC MYA-4892 / CBS 513.88 / FGSC A1513)).